Consider the following 363-residue polypeptide: G-protein coupled receptor 6 (363 aa).

Topologically, residues 1-75 are extracellular; it reads MNASAAALNE…SGLLLSAVNP (75 aa). N2 and N9 each carry an N-linked (GlcNAc...) asparagine glycan. The tract at residues 28–51 is disordered; the sequence is AGTPDTSEWGPPAASAALGGGGGP. N52 carries N-linked (GlcNAc...) asparagine glycosylation. A helical transmembrane segment spans residues 76-95; it reads WDVLLCVSGTVIAGENALVV. At 96-107 the chain is on the cytoplasmic side; it reads ALIASTPALRTP. Residues 108–131 traverse the membrane as a helical segment; the sequence is MFVLVGSLATADLLAGCGLILHFV. Residues 132 to 143 are Extracellular-facing; it reads FQYVVPSETVSL. Residues 144-165 traverse the membrane as a helical segment; it reads LMVGFLVASFAASVSSLLAITV. Over 166–186 the chain is Cytoplasmic; the sequence is DRYLSLYNALTYYSRRTLLGV. The chain crosses the membrane as a helical span at residues 187-206; that stretch reads HLLLAATWTVSLGLGLLPVL. Over 207 to 231 the chain is Extracellular; sequence GWNCLADRASCSVVRPLTRSHVALL. Residues 232-250 form a helical membrane-spanning segment; it reads STSFFVVFGIMLHLYVRIC. Over 251 to 278 the chain is Cytoplasmic; it reads QVVWRHAHQIALQQHCLAPPHLAATRKG. Residues 279-305 form a helical membrane-spanning segment; it reads VGTLAVVLGTFGASWLPFAIYCVVGSQ. Topologically, residues 306–310 are extracellular; sequence EDPAI. A helical transmembrane segment spans residues 311-332; that stretch reads YTYATLLPATYNSMINPIIYAF. Topologically, residues 333–363 are cytoplasmic; the sequence is RNQEIQRALWLLFCGCFQSKVPFRSRSPSEV. Residue C346 is the site of S-palmitoyl cysteine attachment. Phosphoserine occurs at positions 357, 359, and 361.

Belongs to the G-protein coupled receptor 1 family. In terms of tissue distribution, expressed in the brain, with a prominent distribution in striatum.

It localises to the cell membrane. Its function is as follows. Orphan receptor with constitutive G(s) signaling activity that activate cyclic AMP. Promotes neurite outgrowth and blocks myelin inhibition in neurons. The polypeptide is G-protein coupled receptor 6 (Gpr6) (Rattus norvegicus (Rat)).